The chain runs to 428 residues: Trigger factor (428 aa).

A PPIase FKBP-type domain is found at 165–240; that stretch reads ADLIKLDAEG…VKEVKRMELP (76 aa).

Belongs to the FKBP-type PPIase family. Tig subfamily.

The protein localises to the cytoplasm. It catalyses the reaction [protein]-peptidylproline (omega=180) = [protein]-peptidylproline (omega=0). Its function is as follows. Involved in protein export. Acts as a chaperone by maintaining the newly synthesized protein in an open conformation. Functions as a peptidyl-prolyl cis-trans isomerase. In Prosthecochloris aestuarii (strain DSM 271 / SK 413), this protein is Trigger factor.